We begin with the raw amino-acid sequence, 306 residues long: MADQLVRATAAQGRIRAVGVLSTRLTEEARGRHKLSYVATAALGRTMAAGLLIASNFKQTEARVNLRLQGDGPLGGILVDAGADGTVRGYVKNPQVELPPSPKGKLDVGRAVGANGFLYVVKDLGYGYPFSGTTELVSGEIGDDVTHYLVTSEQVASALMLGVFVGADGVDAAGGLLLQVMPSADGQEDEELAATLERRLASVEGFTPLVRSGKRIPQILEELLGDMGLEIFPEVQLVRFHCHCSPQRVLGALKMMGEAELLDMIEKDGGAEATCHFCNQVYQVKASELETLVEQLRSEREVSSQE.

Cystine bridges form between Cys242–Cys244 and Cys275–Cys278.

It belongs to the HSP33 family. Under oxidizing conditions two disulfide bonds are formed involving the reactive cysteines. Under reducing conditions zinc is bound to the reactive cysteines and the protein is inactive.

Its subcellular location is the cytoplasm. In terms of biological role, redox regulated molecular chaperone. Protects both thermally unfolding and oxidatively damaged proteins from irreversible aggregation. Plays an important role in the bacterial defense system toward oxidative stress. The polypeptide is 33 kDa chaperonin (Gloeobacter violaceus (strain ATCC 29082 / PCC 7421)).